The primary structure comprises 1704 residues: Nonribosomal peptide synthetase ivoA (1704 aa).

The adenylation stretch occupies residues 234–620; the sequence is EEQAIARPDQ…HGRKDLEVKI (387 aa). The region spanning 748–827 is the Carrier domain; sequence NLISDPSDSM…EMATKTSAVE (80 aa). At S785 the chain carries O-(pantetheine 4'-phosphoryl)serine. The segment at 840 to 1266 is epimerization (E) domain; that stretch reads FPLSPVQQMY…QELLETAVER (427 aa). The tract at residues 1325-1477 is condensation; that stretch reads VQGDWTIEKT…AQSSTPSARK (153 aa).

The protein belongs to the NRP synthetase family.

It carries out the reaction L-tryptophan + ATP + H2O = D-tryptophan + AMP + diphosphate + H(+). It participates in pigment biosynthesis. Functionally, nonribosomal peptide synthetase; part of the pathway that mediates the biosynthesis of the gray-brown conidiophore pigment. The first step of the pathway is performed by the nonribosomal peptide synthetase ivoA that catalyzes ATP-dependent unidirectional stereoinversion of L-tryptophan to D-tryptophan with complete conversion. While the stereoinversion is catalyzed by the epimerization (E) domain of ivoA, the terminal condensation (C) domain stereoselectively hydrolyzes D-tryptophanyl-S-phosphopantetheine thioester and thus represents a non-canonical C domain function. D-tryptophan is acetylated, probably by an endogenous acetyltransferase. N-acetyltryptophan is further 6-hydroxylated into N-acetyl-6-hydroxytryptophan (AHT) by the cytochrome P450 monooxygenase ivoC. N-acetyl-6-hydroxytryptophan is substrate of the N-acetyl-6-hydroxytryptophan oxidase ivoB to produce the gray-brown conidiophore pigment. This Emericella nidulans (strain FGSC A4 / ATCC 38163 / CBS 112.46 / NRRL 194 / M139) (Aspergillus nidulans) protein is Nonribosomal peptide synthetase ivoA.